The sequence spans 154 residues: MESILESRSGHWAGGPAPGQFYRIPPTPGSIVDPXSVLYGSPITRTQNPMVTGTSVLGVKFEGGVVIAADMLGSYGSLARFRNISRIMRVNNSTMLGASGDYADFQYLKQVLGQMVIDEELLGDGHSYSPKAIHSWLTRAMYNRRFKMNPLWTT.

Position 1 is an N-acetylmethionine (methionine 1). Positions 1 to 45 (MESILESRSGHWAGGPAPGQFYRIPPTPGSIVDPXSVLYGSPITR) are excised as a propeptide. Tyrosine 102 is subject to Phosphotyrosine.

Belongs to the peptidase T1B family. As to quaternary structure, the 26S proteasome consists of a 20S proteasome core and two 19S regulatory subunits. The 20S proteasome core is a barrel-shaped complex made of 28 subunits that are arranged in four stacked rings. The two outer rings are each formed by seven alpha subunits, and the two inner rings are formed by seven beta subunits. The proteolytic activity is exerted by three beta-subunits PSMB5, PSMB6 and PSMB7. Forms a ternary complex with SMAD1 and OAZ1 before PSMB4 is incorporated into the 20S proteasome. Interacts with PRPF19.

It is found in the cytoplasm. It localises to the nucleus. Non-catalytic component of the 20S core proteasome complex involved in the proteolytic degradation of most intracellular proteins. This complex plays numerous essential roles within the cell by associating with different regulatory particles. Associated with two 19S regulatory particles, forms the 26S proteasome and thus participates in the ATP-dependent degradation of ubiquitinated proteins. The 26S proteasome plays a key role in the maintenance of protein homeostasis by removing misfolded or damaged proteins that could impair cellular functions, and by removing proteins whose functions are no longer required. Associated with the PA200 or PA28, the 20S proteasome mediates ubiquitin-independent protein degradation. This type of proteolysis is required in several pathways including spermatogenesis (20S-PA200 complex) or generation of a subset of MHC class I-presented antigenic peptides (20S-PA28 complex). SMAD1/OAZ1/PSMB4 complex mediates the degradation of the CREBBP/EP300 repressor SNIP1. This is Proteasome subunit beta type-4 (PSMB4) from Sus scrofa (Pig).